The following is a 540-amino-acid chain: Chaperonin GroEL (540 aa).

ATP contacts are provided by residues 29–32 (TLGP), 86–90 (DGTTT), G413, 476–478 (NAA), and D492.

The protein belongs to the chaperonin (HSP60) family. In terms of assembly, forms a cylinder of 14 subunits composed of two heptameric rings stacked back-to-back. Interacts with the co-chaperonin GroES.

It localises to the cytoplasm. The enzyme catalyses ATP + H2O + a folded polypeptide = ADP + phosphate + an unfolded polypeptide.. Its function is as follows. Together with its co-chaperonin GroES, plays an essential role in assisting protein folding. The GroEL-GroES system forms a nano-cage that allows encapsulation of the non-native substrate proteins and provides a physical environment optimized to promote and accelerate protein folding. This chain is Chaperonin GroEL, found in Streptococcus gordonii.